A 392-amino-acid polypeptide reads, in one-letter code: Acetyl-CoA acetyltransferase (392 aa).

The Acyl-thioester intermediate role is filled by C85. CoA is bound by residues C206, S207, V209, and K332. Residue H336 is the Proton acceptor of the active site.

This sequence belongs to the thiolase-like superfamily. Thiolase family. In terms of assembly, interacts with HMG-CoA synthase (HMGCS) that catalyzes the second step in the pathway and with a DUF35 protein. The acetoacetyl-CoA thiolase/HMG-CoA synthase complex channels the intermediate via a fused CoA-binding site, which allows for efficient coupling of the endergonic thiolase reaction with the exergonic HMGCS reaction.

It carries out the reaction 2 acetyl-CoA = acetoacetyl-CoA + CoA. The protein operates within metabolic intermediate biosynthesis; (R)-mevalonate biosynthesis; (R)-mevalonate from acetyl-CoA: step 1/3. Functionally, catalyzes the condensation of two acetyl-coA molecules into acetoacetyl-CoA. Functions in the mevalonate (MVA) pathway leading to isopentenyl diphosphate (IPP), a key precursor for the biosynthesis of isoprenoid compounds that are building blocks of archaeal membrane lipids. This is Acetyl-CoA acetyltransferase from Methanocaldococcus jannaschii (strain ATCC 43067 / DSM 2661 / JAL-1 / JCM 10045 / NBRC 100440) (Methanococcus jannaschii).